Here is a 504-residue protein sequence, read N- to C-terminus: Malonyl-CoA decarboxylase, mitochondrial (504 aa).

Residues 1–50 constitute a mitochondrion transit peptide; that stretch reads MRGLRRGLSRLGPRLGPWAVPRSLRRVLRAAGPWRGQSSAGSVSERGGAS. Positions 51–201 are alpha-helical domain; sequence MEEVLSRSVP…VLKNMLSEWF (151 aa). A catalytic domain region spans residues 202–504; it reads STGFLNLERV…VSQFQQNSKL (303 aa). Ser-340 functions as the Proton acceptor in the catalytic mechanism. His-434 functions as the Proton donor in the catalytic mechanism. The Microbody targeting signal signature appears at 502 to 504; it reads SKL.

It is found in the mitochondrion. The protein resides in the cytoplasm. It localises to the peroxisome. It catalyses the reaction malonyl-CoA + H(+) = acetyl-CoA + CO2. The protein operates within metabolic intermediate biosynthesis; acetyl-CoA biosynthesis; acetyl-CoA from malonyl-CoA: step 1/1. Functionally, catalyzes the conversion of malonyl-CoA to acetyl-CoA. In the fatty acid biosynthesis MCD selectively removes malonyl-CoA and thus assures that methyl-malonyl-CoA is the only chain elongating substrate for fatty acid synthase and that fatty acids with multiple methyl side chains are produced. This Anser anser anser (Western greylag goose) protein is Malonyl-CoA decarboxylase, mitochondrial (MLYCD).